The following is a 35-amino-acid chain: GCRYMFGDCEKDEDCCKHLGCKRKMKYCAWDFTFT.

Intrachain disulfides connect Cys2/Cys16, Cys9/Cys21, and Cys15/Cys28.

Belongs to the neurotoxin 10 (Hwtx-1) family. 28 (Jztx-11) subfamily. Expressed by the venom gland.

It localises to the secreted. Gating-modifier toxin that targets voltage-gated sodium channels with a preferential activity on Nav1.7/SCN9A. On Nav1.7/SCN9A, the toxin acts by shifting the voltage-dependence of activation to more depolarized potentials, whereas it does not cause significant effect on the voltage-dependence of activation on other sodium channels. Minor effects are observed on the voltage-dependence of steady-state fast inactivation for all sodium channels tested (Nav1.1/SCN1A-Nav1.8/SCN10A). By testing the toxin on channel chimera, it has been shown to interact with the S3-S4 linkers in DII and DIV domains of Nav1.7/SCN9A. In vivo, the toxin dose-dependently reduces OD1-induced spontaneous pain behaviors. This is Mu-theraphotoxin-Pn3b from Pamphobeteus nigricolor (Giant blue bloom tarantula).